We begin with the raw amino-acid sequence, 93 residues long: Protein FMP16, mitochondrial (93 aa).

Residues 1 to 25 (MLRTTFLRTPRQLMRKSPRASFSIV) constitute a mitochondrion transit peptide. Residues 30 to 93 (FPHLKNNQDE…EQNRPDDGVY (64 aa)) form a disordered region. Positions 35–93 (NNQDEAEKKEQGLFDSNKKRLDTLEHGKNPDYKQPGMEDLKKKGDDARIEQNRPDDGVY) are enriched in basic and acidic residues.

Its subcellular location is the mitochondrion. This chain is Protein FMP16, mitochondrial (FMP16), found in Saccharomyces cerevisiae (strain ATCC 204508 / S288c) (Baker's yeast).